We begin with the raw amino-acid sequence, 804 residues long: Probable replication endonuclease from prophage-like region 2 (804 aa).

Active-site O-(5'-phospho-DNA)-tyrosine intermediate residues include Tyr-503 and Tyr-507.

The protein belongs to the phage GPA family.

In terms of biological role, possible endonuclease which induces a single-strand cut and initiates DNA replication. In Salmonella typhi, this protein is Probable replication endonuclease from prophage-like region 2.